The sequence spans 293 residues: Probable tRNA-splicing endonuclease subunit Sen2 (293 aa).

Catalysis depends on residues tyrosine 157, histidine 165, and lysine 204. Residues 267–287 traverse the membrane as a helical segment; that stretch reads VVFNHWGVILGFTVLSGLLVY.

This sequence belongs to the tRNA-intron endonuclease family. TRNA splicing endonuclease is a heterotetramer composed of SEN2, SEN15, SEN34/LENG5 and SEN54.

It is found in the nucleus. The protein localises to the membrane. The enzyme catalyses pretRNA = a 3'-half-tRNA molecule with a 5'-OH end + a 5'-half-tRNA molecule with a 2',3'-cyclic phosphate end + an intron with a 2',3'-cyclic phosphate and a 5'-hydroxyl terminus.. In terms of biological role, constitutes one of the two catalytic subunit of the tRNA-splicing endonuclease complex, a complex responsible for identification and cleavage of the splice sites in pre-tRNA. It cleaves pre-tRNA at the 5'- and 3'-splice sites to release the intron. The products are an intron and two tRNA half-molecules bearing 2',3'-cyclic phosphate and 5'-OH termini. There are no conserved sequences at the splice sites, but the intron is invariably located at the same site in the gene, placing the splice sites an invariant distance from the constant structural features of the tRNA body. Probably carries the active site for 5'-splice site cleavage. The polypeptide is Probable tRNA-splicing endonuclease subunit Sen2 (Oryza sativa subsp. japonica (Rice)).